The primary structure comprises 612 residues: Amyloid-beta precursor-like protein (612 aa).

The first 21 residues, 1 to 21, serve as a signal peptide directing secretion; that stretch reads MGPSVRPGFLVVVIGLQFVAA. Residues 22-542 are Extracellular-facing; that stretch reads SMEVNSRKFE…NLYANSHANS (521 aa). The GFLD subdomain stretch occupies residues 28–122; sequence RKFEPMVAFI…PFRCLVGPFQ (95 aa). The 162-residue stretch at 28 to 189 folds into the E1 domain; it reads RKFEPMVAFI…SGVEFVCCPK (162 aa). 6 cysteine pairs are disulfide-bonded: Cys-38–Cys-60, Cys-71–Cys-116, Cys-96–Cys-103, Cys-132–Cys-187, Cys-143–Cys-173, and Cys-157–Cys-186. N-linked (GlcNAc...) asparagine glycosylation is found at Asn-99, Asn-108, and Asn-150. The interval 130 to 189 is cuBD subdomain; sequence EHCIFDHYHDPRVCNEFDQCNETAMSKCSARGMTTQSFAMLWPCQEPGHFSGVEFVCCPK. The 197-residue stretch at 223–419 folds into the E2 domain; that stretch reads GDSKYMSKYA…KQVRPNIDKF (197 aa). 2 disordered regions span residues 251–276 and 437–490; these read ERDTKMMKDWKAARDSVREKKKTDPK and QEPT…FDSE. 2 stretches are compositionally biased toward basic and acidic residues: residues 439–453 and 470–483; these read PTPKEAPVETQKAED and KPTEARPEQQEDIK. A helical membrane pass occupies residues 543–563; the sequence is VLGIAIGGVVVFIIIVVAVVM. At 564–612 the chain is on the cytoplasmic side; the sequence is LKRRTQRQRVTHGFVEVDPAASPEERHVANMQMSGYENPTYKYFEMQNQ. The interval 598–612 is required for the interaction with kinesin heavy chain and for anterograde transport in axons; it reads GYENPTYKYFEMQNQ. Positions 599–604 match the YENPXY motif motif; the sequence is YENPTY.

The protein belongs to the APP family. In terms of assembly, interacts (via cytoplasmic domain) with kinesin heavy chain. Expressed in the cervicothoracic ganglion (stellate ganglion) (at protein level).

It localises to the cell membrane. It is found in the cell projection. The protein localises to the axon. Functionally, acts as a kinesin I membrane receptor, thereby playing a role in axonal anterograde transport of cargo towards synapses in axons. In Doryteuthis pealeii (Longfin inshore squid), this protein is Amyloid-beta precursor-like protein.